The primary structure comprises 709 residues: UvrABC system protein B (709 aa).

A Helicase ATP-binding domain is found at Glu35–Val416. Gly48–Ser55 contributes to the ATP binding site. Positions Tyr101–Ile124 match the Beta-hairpin motif. The 167-residue stretch at Gln438–Thr604 folds into the Helicase C-terminal domain. Residues Ala666–Glu701 form the UVR domain.

This sequence belongs to the UvrB family. Forms a heterotetramer with UvrA during the search for lesions. Interacts with UvrC in an incision complex.

It is found in the cytoplasm. The UvrABC repair system catalyzes the recognition and processing of DNA lesions. A damage recognition complex composed of 2 UvrA and 2 UvrB subunits scans DNA for abnormalities. Upon binding of the UvrA(2)B(2) complex to a putative damaged site, the DNA wraps around one UvrB monomer. DNA wrap is dependent on ATP binding by UvrB and probably causes local melting of the DNA helix, facilitating insertion of UvrB beta-hairpin between the DNA strands. Then UvrB probes one DNA strand for the presence of a lesion. If a lesion is found the UvrA subunits dissociate and the UvrB-DNA preincision complex is formed. This complex is subsequently bound by UvrC and the second UvrB is released. If no lesion is found, the DNA wraps around the other UvrB subunit that will check the other stand for damage. This chain is UvrABC system protein B, found in Micrococcus luteus (strain ATCC 4698 / DSM 20030 / JCM 1464 / CCM 169 / CCUG 5858 / IAM 1056 / NBRC 3333 / NCIMB 9278 / NCTC 2665 / VKM Ac-2230) (Micrococcus lysodeikticus).